Here is a 222-residue protein sequence, read N- to C-terminus: Putative O-methyltransferase MAV_1364 (222 aa).

S-adenosyl-L-methionine is bound by residues Val-49, Glu-71, 73 to 74 (GT), Ser-79, Asp-97, and Ile-98. Residue Asp-145 coordinates substrate. Asp-147 serves as a coordination point for S-adenosyl-L-methionine.

The protein belongs to the class I-like SAM-binding methyltransferase superfamily. Cation-dependent O-methyltransferase family.

The chain is Putative O-methyltransferase MAV_1364 from Mycobacterium avium (strain 104).